The sequence spans 230 residues: Uracil-DNA glycosylase (230 aa).

The active-site Proton acceptor is the aspartate 70.

Belongs to the uracil-DNA glycosylase (UDG) superfamily. UNG family.

The protein resides in the cytoplasm. The catalysed reaction is Hydrolyzes single-stranded DNA or mismatched double-stranded DNA and polynucleotides, releasing free uracil.. Its function is as follows. Excises uracil residues from the DNA which can arise as a result of misincorporation of dUMP residues by DNA polymerase or due to deamination of cytosine. The protein is Uracil-DNA glycosylase of Pseudomonas fluorescens (strain SBW25).